A 270-amino-acid chain; its full sequence is Cerberus (270 aa).

The signal sequence occupies residues 1 to 20; that stretch reads MLLNVLRICIIVCLVNDGAG. N103, N112, and N154 each carry an N-linked (GlcNAc...) asparagine glycan. 4 cysteine pairs are disulfide-bonded: C169–C215, C183–C229, C193–C245, and C197–C247. Residues 169-253 enclose the CTCK domain; it reads CKTLPFTQNI…ECTCEAHKSN (85 aa). The N-linked (GlcNAc...) asparagine glycan is linked to N228.

It belongs to the DAN family. As to quaternary structure, the long chain interacts with nodal/nr-1, bmp4 and wnt8, thereby inhibiting their function. The short chain interacts with nodal/nr-1 but not bmp4 or wnt8. In terms of tissue distribution, a component of the Nieuwkoop signaling center in the blastula. Expressed transiently in a broad anterior domain of the gastrula, including the anterior endoderm of the Spemann's organizer and more laterally the cardiac primordia. Expression is excluded from the prospective prechordal plate region and the ring of cells that give rise to the trunk-tail mesoderm.

The protein localises to the secreted. Its function is as follows. Inhibits wnt, nodal/nr-1 and bmp signaling in the embryo to promote head formation and anterior neural induction. Within the endoderm, acts as an essential mediator of nodal/nr-1-induced cardiogenesis in the overlying mesoderm. This chain is Cerberus, found in Xenopus laevis (African clawed frog).